The primary structure comprises 97 residues: MTAKGQMLQDPFLNALRKEHVPVSIYLVNGIKLQGQVESFDQYVVLLRNTSVTQMVYKHAISTIVPARSVNLQHENKPQAAPASTLVQVETVQQPAE.

Positions 10–70 (DPFLNALRKE…ISTIVPARSV (61 aa)) constitute a Sm domain.

This sequence belongs to the Hfq family. As to quaternary structure, homohexamer.

In terms of biological role, RNA chaperone that binds small regulatory RNA (sRNAs) and mRNAs to facilitate mRNA translational regulation in response to envelope stress, environmental stress and changes in metabolite concentrations. Also binds with high specificity to tRNAs. The chain is RNA-binding protein Hfq from Neisseria gonorrhoeae (strain ATCC 700825 / FA 1090).